We begin with the raw amino-acid sequence, 394 residues long: GDSL esterase/lipase At2g27360 (394 aa).

The signal sequence occupies residues 1 to 24 (MASQDCHMLLSFFISTFLITVVTS). Ser40 functions as the Nucleophile in the catalytic mechanism. Residues Asn136 and Asn319 are each glycosylated (N-linked (GlcNAc...) asparagine). Catalysis depends on residues Asp344 and His347. 2 N-linked (GlcNAc...) asparagine glycosylation sites follow: Asn371 and Asn382.

Belongs to the 'GDSL' lipolytic enzyme family.

The protein localises to the secreted. The protein is GDSL esterase/lipase At2g27360 of Arabidopsis thaliana (Mouse-ear cress).